The primary structure comprises 734 residues: ABC transporter D family member 1 (734 aa).

The next 4 helical transmembrane spans lie at 52 to 72 (IIKI…ILFG), 112 to 132 (FAIG…SIMA), 177 to 197 (FTTL…VVVY), and 204 to 224 (TTID…GYLI). Positions 63–351 (PLTLFLILFG…VEEEQAKIQF (289 aa)) constitute an ABC transmembrane type-1 domain. Over residues 271 to 286 (HPEKRFDNNDYDHGYE) the composition is skewed to basic and acidic residues. The tract at residues 271 to 296 (HPEKRFDNNDYDHGYESDDSDQSCDE) is disordered. Residues 332-359 (DSNDQKEELLVEEEQAKIQFEALLKNKK) adopt a coiled-coil conformation. Residues 374-394 (LFTYLSPIANYFIIAIPVFFL) traverse the membrane as a helical segment. Residues 492 to 729 (ITLDDVTYFT…NNNNTNKIAE (238 aa)) form the ABC transporter domain. ATP is bound at residue 525–532 (GPSGSGKS). The segment covering 712-725 (QSNNINNNNNNNTN) has biased composition (low complexity). The interval 712–734 (QSNNINNNNNNNTNKIAEDSVFD) is disordered.

It belongs to the ABC transporter superfamily. ABCD family. Peroxisomal fatty acyl CoA transporter (TC 3.A.1.203) subfamily.

The protein localises to the membrane. It catalyses the reaction (9Z)-octadecenoyl-CoA(in) = (9Z)-octadecenoyl-CoA(out). This Dictyostelium discoideum (Social amoeba) protein is ABC transporter D family member 1 (abcD1).